Reading from the N-terminus, the 210-residue chain is dITP/XTP pyrophosphatase (210 aa).

16 to 21 (SNNKGK) contacts substrate. The Proton acceptor role is filled by Asp-79. Asp-79 provides a ligand contact to Mg(2+). Substrate is bound by residues Ser-80, 166–169 (FGYD), Lys-189, and 194–195 (HR).

This sequence belongs to the HAM1 NTPase family. In terms of assembly, homodimer. It depends on Mg(2+) as a cofactor.

It carries out the reaction XTP + H2O = XMP + diphosphate + H(+). It catalyses the reaction dITP + H2O = dIMP + diphosphate + H(+). The catalysed reaction is ITP + H2O = IMP + diphosphate + H(+). In terms of biological role, pyrophosphatase that catalyzes the hydrolysis of nucleoside triphosphates to their monophosphate derivatives, with a high preference for the non-canonical purine nucleotides XTP (xanthosine triphosphate), dITP (deoxyinosine triphosphate) and ITP. Seems to function as a house-cleaning enzyme that removes non-canonical purine nucleotides from the nucleotide pool, thus preventing their incorporation into DNA/RNA and avoiding chromosomal lesions. The sequence is that of dITP/XTP pyrophosphatase from Acinetobacter baylyi (strain ATCC 33305 / BD413 / ADP1).